A 254-amino-acid polypeptide reads, in one-letter code: Probable phosphatase Shew185_1467 (254 aa).

Histidine 8, histidine 10, histidine 16, histidine 41, glutamate 74, histidine 102, histidine 132, aspartate 193, and histidine 195 together coordinate Zn(2+).

It belongs to the PHP family. Zn(2+) serves as cofactor.

In Shewanella baltica (strain OS185), this protein is Probable phosphatase Shew185_1467.